Consider the following 87-residue polypeptide: Small ribosomal subunit protein uS15 (87 aa).

This sequence belongs to the universal ribosomal protein uS15 family. Part of the 30S ribosomal subunit. Forms a bridge to the 50S subunit in the 70S ribosome, contacting the 23S rRNA.

Functionally, one of the primary rRNA binding proteins, it binds directly to 16S rRNA where it helps nucleate assembly of the platform of the 30S subunit by binding and bridging several RNA helices of the 16S rRNA. In terms of biological role, forms an intersubunit bridge (bridge B4) with the 23S rRNA of the 50S subunit in the ribosome. In Alkaliphilus metalliredigens (strain QYMF), this protein is Small ribosomal subunit protein uS15.